The primary structure comprises 272 residues: Zinc transporter ZupT (272 aa).

8 helical membrane-spanning segments follow: residues 11–31 (IALA…LMVV), 40–60 (LLAF…LTEI), 76–96 (LGFT…MVID), 126–146 (LMTA…TFFA), 158–178 (AFAI…PVYF), 189–209 (ASLL…LALF), 211–231 (VLSD…MVFL), and 250–270 (VYGL…FRFA). Positions 136 and 139 each coordinate Fe(2+). 2 residues coordinate Zn(2+): Glu139 and His164. The Fe(2+) site is built by Asn165, Glu168, and Glu197. Glu168 contributes to the Zn(2+) binding site.

It belongs to the ZIP transporter (TC 2.A.5) family. ZupT subfamily.

It is found in the cell inner membrane. The catalysed reaction is Zn(2+)(in) = Zn(2+)(out). Its function is as follows. Mediates zinc uptake. May also transport other divalent cations. The sequence is that of Zinc transporter ZupT from Xanthomonas axonopodis pv. citri (strain 306).